The primary structure comprises 108 residues: DNA-binding protein HBbu (108 aa).

The protein belongs to the bacterial histone-like protein family.

Functionally, histone-like DNA-binding protein which is capable of wrapping DNA to stabilize it, and thus to prevent its denaturation under extreme environmental conditions. This chain is DNA-binding protein HBbu (hbb), found in Borrelia garinii subsp. bavariensis (strain ATCC BAA-2496 / DSM 23469 / PBi) (Borreliella bavariensis).